We begin with the raw amino-acid sequence, 688 residues long: Ethylmalonyl-CoA mutase (688 aa).

The 130-residue stretch at 530–659 (TPRLVVGKPG…VGLAKVVERA (130 aa)) folds into the B12-binding domain. Residue histidine 543 coordinates adenosylcob(III)alamin. The tract at residues 666 to 688 (DRADTEAGVPGAPKRNESGAQVF) is disordered.

The protein belongs to the methylmalonyl-CoA mutase family. It depends on adenosylcob(III)alamin as a cofactor.

It carries out the reaction (2R)-ethylmalonyl-CoA = (2S)-methylsuccinyl-CoA. In terms of biological role, radical enzyme that catalyzes the transformation of (2R)-ethylmalonyl-CoA to (2S)-methylsuccinyl-CoA. Is involved in the ethylmalonyl-CoA pathway for acetyl-CoA assimilation required for M.extorquens growth on one- and two-carbon compounds such as ethylamine, methanol or ethanol as sole carbon source. This enzyme acts as a regulatory metabolic control point in this pathway, that allows M.extorquens to efficiently restore metabolic balance when challenged with a sudden change in the growth substrate. This Methylorubrum extorquens (strain ATCC 14718 / DSM 1338 / JCM 2805 / NCIMB 9133 / AM1) (Methylobacterium extorquens) protein is Ethylmalonyl-CoA mutase.